A 673-amino-acid chain; its full sequence is Sodium/myo-inositol cotransporter 2 (673 aa).

Residues 1–27 (MESATISPQPPQSDSLEAFPQKSMEPA) lie on the Extracellular side of the membrane. The chain crosses the membrane as a helical span at residues 28–48 (DIAVLVLYFLFVLAVGLWSTV). The Cytoplasmic segment spans residues 49 to 65 (RTKRDTVKGYFLAGGDM). Residues 66-88 (VWWPVGASLFASNVGSGHFIGLA) traverse the membrane as a helical segment. Residues 89 to 102 (GSGAAVGISVAAYE) lie on the Extracellular side of the membrane. A helical transmembrane segment spans residues 103 to 123 (LNGLFSVLMLAWVFLPIYIAG). Residues 124-148 (QVTTMPEYLRRRFGGNRISITLAVL) lie on the Cytoplasmic side of the membrane. The chain crosses the membrane as a helical span at residues 149–169 (YLFIYIFTKISVDMYAGAIFI). The Extracellular segment spans residues 170 to 180 (QQSLHLDLYLA). A helical membrane pass occupies residues 181-201 (IVGLLAITALYTVAGGLAAVI). At 202-208 (YTDALQT) the chain is on the cytoplasmic side. The chain crosses the membrane as a helical span at residues 209 to 229 (VIMLIGAFILMGYSFAAVGGM). Residues 230-272 (EGLKDQYFLALASNRSENSSCGLPREDAFHIFRDPLTSDLPWP) lie on the Extracellular side of the membrane. Residues 273-293 (GILFGMSIPSLWYWCTDQVIV) form a helical membrane-spanning segment. Over 294–308 (QRSLAAKNLSHAKGG) the chain is Cytoplasmic. Residues 309-329 (SLMAAYLKVLPLFLMVFPGMV) traverse the membrane as a helical segment. Residues 330–375 (SRVLFPDQVACAHPDICQRVCSNPSGCSDIAYPKLVLELLPTGLRG) are Extracellular-facing. A helical transmembrane segment spans residues 376 to 396 (LMMAVMVAALMSSLTSIFNSA). Topologically, residues 397-418 (STIFTMDLWNHIRPRASERELM) are cytoplasmic. Residues 419 to 439 (IVGRIFVFALVLVSILWIPIV) form a helical membrane-spanning segment. Residues 440–446 (QASQGGQ) are Extracellular-facing. The chain crosses the membrane as a helical span at residues 447-467 (LFIYIQSISSYLQPPVAMVFI). Residues 468-479 (MGCFWKRTNEKG) lie on the Cytoplasmic side of the membrane. Residues 480–500 (AFSGLILGLLLGLVRLILDFV) form a helical membrane-spanning segment. Residues 501 to 521 (YAQPRCDQPDDRPAVVKDVHY) are Extracellular-facing. The helical transmembrane segment at 522-542 (LYFSMILSFTTLITVVTVSWF) threads the bilayer. Residues 543-652 (TETPSKEMVS…SLEENPLVKT (110 aa)) lie on the Cytoplasmic side of the membrane. Residues 653–673 (LLDVNCIVCISCAIFLWGYFA) traverse the membrane as a helical segment.

Belongs to the sodium:solute symporter (SSF) (TC 2.A.21) family.

It is found in the membrane. The protein localises to the apical cell membrane. It carries out the reaction myo-inositol(out) + 2 Na(+)(out) = myo-inositol(in) + 2 Na(+)(in). The catalysed reaction is 1D-chiro-inositol(out) + 2 Na(+)(out) = 1D-chiro-inositol(in) + 2 Na(+)(in). The enzyme catalyses D-glucose(out) + 2 Na(+)(out) = D-glucose(in) + 2 Na(+)(in). It catalyses the reaction D-xylose(out) + 2 Na(+)(out) = D-xylose(in) + 2 Na(+)(in). With respect to regulation, MI transport activity inhibited by D-chiro-inositol (DCI), phlorizin (Pz) and sodium (Na(+)). Insulin increases D-chiro-inositol uptake. Involved in the sodium-dependent cotransport of myo-inositol (MI) with a Na(+):MI stoichiometry of 2:1. Exclusively responsible for apical MI transport and absorption in intestine. Can also transport D-chiro-inositol (DCI) but not L-fucose. Exhibits stereospecific cotransport of both D-glucose and D-xylose. May induce apoptosis through the TNF-alpha, PDCD1 pathway. May play a role in the regulation of MI concentration in serum, involving reabsorption in at least the proximal tubule of the kidney. This chain is Sodium/myo-inositol cotransporter 2, found in Mus musculus (Mouse).